We begin with the raw amino-acid sequence, 196 residues long: ATP-dependent Clp protease proteolytic subunit (196 aa).

The Nucleophile role is filled by Ser-101. His-126 is a catalytic residue.

The protein belongs to the peptidase S14 family. Component of the chloroplastic Clp protease core complex.

It localises to the plastid. It is found in the chloroplast stroma. It catalyses the reaction Hydrolysis of proteins to small peptides in the presence of ATP and magnesium. alpha-casein is the usual test substrate. In the absence of ATP, only oligopeptides shorter than five residues are hydrolyzed (such as succinyl-Leu-Tyr-|-NHMec, and Leu-Tyr-Leu-|-Tyr-Trp, in which cleavage of the -Tyr-|-Leu- and -Tyr-|-Trp bonds also occurs).. Its function is as follows. Cleaves peptides in various proteins in a process that requires ATP hydrolysis. Has a chymotrypsin-like activity. Plays a major role in the degradation of misfolded proteins. The chain is ATP-dependent Clp protease proteolytic subunit from Coffea arabica (Arabian coffee).